The sequence spans 341 residues: S-adenosylmethionine:tRNA ribosyltransferase-isomerase (341 aa).

Belongs to the QueA family. Monomer.

It is found in the cytoplasm. The enzyme catalyses 7-aminomethyl-7-carbaguanosine(34) in tRNA + S-adenosyl-L-methionine = epoxyqueuosine(34) in tRNA + adenine + L-methionine + 2 H(+). It participates in tRNA modification; tRNA-queuosine biosynthesis. In terms of biological role, transfers and isomerizes the ribose moiety from AdoMet to the 7-aminomethyl group of 7-deazaguanine (preQ1-tRNA) to give epoxyqueuosine (oQ-tRNA). The sequence is that of S-adenosylmethionine:tRNA ribosyltransferase-isomerase from Thermoanaerobacter sp. (strain X514).